The chain runs to 334 residues: Cytochrome c551 peroxidase (334 aa).

A signal peptide spans 1–26 (MIKRTLTVSLLSLSLGAMFASAGVMA). Residues Cys65, Cys68, His69, Cys209, Cys212, His213, His270, and Met284 each coordinate heme c. The tract at residues 315-334 (FKLPILPPSNNDTPRSQPYE) is disordered. Polar residues predominate over residues 322-334 (PSNNDTPRSQPYE).

Binds 2 heme c groups covalently per subunit.

It localises to the periplasm. It carries out the reaction 2 Fe(II)-[cytochrome c] + H2O2 + 2 H(+) = 2 Fe(III)-[cytochrome c] + 2 H2O. In Nitrosomonas europaea (strain ATCC 19718 / CIP 103999 / KCTC 2705 / NBRC 14298), this protein is Cytochrome c551 peroxidase (ccp).